Reading from the N-terminus, the 193-residue chain is Resuscitation-promoting factor Rpf1 (193 aa).

The signal sequence occupies residues 1-35; it reads MGRHSTKTSSAFTKLAASTIAFGAAATIMAPSASA.

Belongs to the transglycosylase family. Rpf subfamily.

It is found in the secreted. Functionally, factor that stimulates resuscitation of dormant cells. Has peptidoglycan (PG) hydrolytic activity. Active in the pM concentration range. Has little to no effect on actively-growing cells. PG fragments could either directly activate the resuscitation pathway of dormant bacteria or serve as a substrate for endogenous Rpf, resulting in low molecular weight products with resuscitation activity. The polypeptide is Resuscitation-promoting factor Rpf1 (rpf1) (Corynebacterium glutamicum (strain ATCC 13032 / DSM 20300 / JCM 1318 / BCRC 11384 / CCUG 27702 / LMG 3730 / NBRC 12168 / NCIMB 10025 / NRRL B-2784 / 534)).